The primary structure comprises 361 residues: Chorismate synthase (361 aa).

NADP(+) is bound by residues arginine 48 and arginine 54. FMN is bound by residues 131-133 (RSS), 243-244 (NA), glycine 287, 302-306 (KPTSS), and arginine 328.

The protein belongs to the chorismate synthase family. In terms of assembly, homotetramer. FMNH2 is required as a cofactor.

The catalysed reaction is 5-O-(1-carboxyvinyl)-3-phosphoshikimate = chorismate + phosphate. The protein operates within metabolic intermediate biosynthesis; chorismate biosynthesis; chorismate from D-erythrose 4-phosphate and phosphoenolpyruvate: step 7/7. Functionally, catalyzes the anti-1,4-elimination of the C-3 phosphate and the C-6 proR hydrogen from 5-enolpyruvylshikimate-3-phosphate (EPSP) to yield chorismate, which is the branch point compound that serves as the starting substrate for the three terminal pathways of aromatic amino acid biosynthesis. This reaction introduces a second double bond into the aromatic ring system. This chain is Chorismate synthase, found in Bradyrhizobium sp. (strain BTAi1 / ATCC BAA-1182).